Reading from the N-terminus, the 195-residue chain is MKEIVIASNNQGKINDFKVIFPDYHVIGISELIPDFDVEETGSTFEENAILKSEAAAKALNKTVIADDSGLEVFALNGEPGIYSARYAGENKSDEANIEKLLNKLGNTTDRRAQFVCVISMSGPDMETKVFKGTVSGEIADGKYGENGFGYDPIFYVPKLDKTMAQLSKEQKGQISHRRNAINLLQAFLEGEKNV.

8–13 provides a ligand contact to substrate; sequence SNNQGK. Glutamate 39 and aspartate 68 together coordinate Mg(2+). Aspartate 68 acts as the Proton acceptor in catalysis. Substrate contacts are provided by residues serine 69, 149–152, lysine 172, and 177–178; these read FGYD and HR.

It belongs to the HAM1 NTPase family. As to quaternary structure, homodimer. The cofactor is Mg(2+).

It catalyses the reaction XTP + H2O = XMP + diphosphate + H(+). It carries out the reaction dITP + H2O = dIMP + diphosphate + H(+). The catalysed reaction is ITP + H2O = IMP + diphosphate + H(+). Functionally, pyrophosphatase that catalyzes the hydrolysis of nucleoside triphosphates to their monophosphate derivatives, with a high preference for the non-canonical purine nucleotides XTP (xanthosine triphosphate), dITP (deoxyinosine triphosphate) and ITP. Seems to function as a house-cleaning enzyme that removes non-canonical purine nucleotides from the nucleotide pool, thus preventing their incorporation into DNA/RNA and avoiding chromosomal lesions. This Staphylococcus aureus (strain Mu50 / ATCC 700699) protein is dITP/XTP pyrophosphatase.